The chain runs to 507 residues: Bifunctional purine biosynthesis protein PurH (507 aa).

In terms of domain architecture, MGS-like spans 1-144 (MKRALLSVSD…KNSDSVWAVV (144 aa)).

The protein belongs to the PurH family.

The enzyme catalyses (6R)-10-formyltetrahydrofolate + 5-amino-1-(5-phospho-beta-D-ribosyl)imidazole-4-carboxamide = 5-formamido-1-(5-phospho-D-ribosyl)imidazole-4-carboxamide + (6S)-5,6,7,8-tetrahydrofolate. It carries out the reaction IMP + H2O = 5-formamido-1-(5-phospho-D-ribosyl)imidazole-4-carboxamide. The protein operates within purine metabolism; IMP biosynthesis via de novo pathway; 5-formamido-1-(5-phospho-D-ribosyl)imidazole-4-carboxamide from 5-amino-1-(5-phospho-D-ribosyl)imidazole-4-carboxamide (10-formyl THF route): step 1/1. It participates in purine metabolism; IMP biosynthesis via de novo pathway; IMP from 5-formamido-1-(5-phospho-D-ribosyl)imidazole-4-carboxamide: step 1/1. The protein is Bifunctional purine biosynthesis protein PurH of Lacticaseibacillus paracasei (strain ATCC 334 / BCRC 17002 / CCUG 31169 / CIP 107868 / KCTC 3260 / NRRL B-441) (Lactobacillus paracasei).